The primary structure comprises 447 residues: Serine/threonine-protein phosphatase 2A 55 kDa regulatory subunit B gamma isoform (447 aa).

7 WD repeats span residues 22-61 (TPAD…KNAP), 87-128 (EIEE…KRPE), 171-209 (GHTY…RSFN), 220-260 (DLTE…LCDK), 279-317 (EIIS…RPIE), 334-375 (ENDC…DVTL), and 410-446 (DFTK…NSDM).

Belongs to the phosphatase 2A regulatory subunit B family. As to quaternary structure, PP2A consists of a common heterodimeric core enzyme, composed of a 36 kDa catalytic subunit (subunit C) and a 65 kDa constant regulatory subunit (PR65 or subunit A), that associates with a variety of regulatory subunits. Proteins that associate with the core dimer include three families of regulatory subunits B (the R2/B/PR55/B55, R3/B''/PR72/PR130/PR59 and R5/B'/B56 families), the 48 kDa variable regulatory subunit, viral proteins, and cell signaling molecules. Interacts with IER5.

In terms of biological role, the B regulatory subunit might modulate substrate selectivity and catalytic activity, and might also direct the localization of the catalytic enzyme to a particular subcellular compartment. The sequence is that of Serine/threonine-protein phosphatase 2A 55 kDa regulatory subunit B gamma isoform (PPP2R2C) from Macaca fascicularis (Crab-eating macaque).